Here is a 535-residue protein sequence, read N- to C-terminus: Methylmalonate-semialdehyde/malonate-semialdehyde dehydrogenase [acylating], mitochondrial (535 aa).

A mitochondrion-targeting transit peptide spans 1-32; that stretch reads MAAAVAAAAAMRSRILQVSSKVNATWYPASSF. N6-acetyllysine; alternate is present on residues Lys-47, Lys-52, Lys-55, and Lys-76. N6-succinyllysine; alternate occurs at positions 47, 52, 55, and 76. Lys-87 is modified (N6-acetyllysine). Lys-117 and Lys-129 each carry N6-acetyllysine; alternate. Lys-117 and Lys-129 each carry N6-succinyllysine; alternate. NAD(+) is bound by residues Ala-183, Phe-185, Lys-209, Glu-212, Arg-213, and Ser-262. A Phosphoserine modification is found at Ser-262. N6-acetyllysine is present on Lys-298. Cys-317 functions as the Nucleophile in the catalytic mechanism. Residues Lys-330 and Lys-331 each carry the N6-acetyllysine modification. N6-acetyllysine; alternate occurs at positions 364 and 376. 2 positions are modified to N6-succinyllysine; alternate: Lys-364 and Lys-376. Phosphoserine is present on Ser-380. Lys-391 carries the post-translational modification N6-succinyllysine. Glu-417 serves as a coordination point for NAD(+). Lys-500 carries the N6-acetyllysine modification. An N6-succinyllysine modification is found at Lys-517.

Belongs to the aldehyde dehydrogenase family. Homotetramer. Acetylation of Lys-55; Lys-117 and Lys-331 is observed in liver mitochondria from fasted mice but not from fed mice.

It is found in the mitochondrion. It carries out the reaction 3-oxopropanoate + NAD(+) + CoA + H2O = hydrogencarbonate + acetyl-CoA + NADH + H(+). It catalyses the reaction 2-methyl-3-oxopropanoate + NAD(+) + CoA + H2O = propanoyl-CoA + hydrogencarbonate + NADH + H(+). The enzyme catalyses (R)-2-methyl-3-oxopropanoate + NAD(+) + CoA + H2O = propanoyl-CoA + hydrogencarbonate + NADH + H(+). The catalysed reaction is (S)-2-methyl-3-oxopropanoate + NAD(+) + CoA + H2O = propanoyl-CoA + hydrogencarbonate + NADH + H(+). Its function is as follows. Malonate and methylmalonate semialdehyde dehydrogenase involved in the catabolism of valine, thymine, and compounds catabolized by way of beta-alanine, including uracil and cytidine. This is Methylmalonate-semialdehyde/malonate-semialdehyde dehydrogenase [acylating], mitochondrial from Mus musculus (Mouse).